We begin with the raw amino-acid sequence, 517 residues long: MAPIALLSVSNKHGIVSLAESLHRMHGFQLLSSGGTAKVLEDAGLPVTRVAEHTGAAEILGGRVKTLHPRVHGGILAMRGDPDHEVDLEQHQIPPIDVVVVNLYPFRETVANPQVSWETAIENIDIGGPAMVRAAAKNHAHVAVLTRPDQYDRFLVALSDGVDGQLRRELALEAFEHTAAYDVAISHWMGVRLSEQASQWLEAIPLRQRLRYGENPHQQAAWYSAPKQGWGGAIQLQGKELSTNNLLDLEAALATVREFGYGTDGAHQAVQDAAVVVKHTNPCGVAIGTGVASALSRALDADRVSAFGGIVALNGLVDATTARELTSLFLECVVAPGFEPEAREILASKANLRLLELAPGAVDAAGRDHIRTILGGVLVQDQDDQLIDPTSWTVASKRAPTAEENDDLTFAWRLVRHVRSNAIVVARAGQSLGVGAGQMNRVGSARLALEAAGDQARGAVLASDGFFPFDDTVRLAANHGIRAVIQPGGSKRDADSIAVCDEFGLAMVLTGKRHFLH.

The MGS-like domain maps to 1 to 146; that stretch reads MAPIALLSVS…KNHAHVAVLT (146 aa).

It belongs to the PurH family.

The catalysed reaction is (6R)-10-formyltetrahydrofolate + 5-amino-1-(5-phospho-beta-D-ribosyl)imidazole-4-carboxamide = 5-formamido-1-(5-phospho-D-ribosyl)imidazole-4-carboxamide + (6S)-5,6,7,8-tetrahydrofolate. It catalyses the reaction IMP + H2O = 5-formamido-1-(5-phospho-D-ribosyl)imidazole-4-carboxamide. The protein operates within purine metabolism; IMP biosynthesis via de novo pathway; 5-formamido-1-(5-phospho-D-ribosyl)imidazole-4-carboxamide from 5-amino-1-(5-phospho-D-ribosyl)imidazole-4-carboxamide (10-formyl THF route): step 1/1. It functions in the pathway purine metabolism; IMP biosynthesis via de novo pathway; IMP from 5-formamido-1-(5-phospho-D-ribosyl)imidazole-4-carboxamide: step 1/1. In Prochlorococcus marinus (strain MIT 9303), this protein is Bifunctional purine biosynthesis protein PurH.